A 507-amino-acid polypeptide reads, in one-letter code: Cytochrome P450 4X1 (507 aa).

The helical transmembrane segment at 14-34 threads the bilayer; the sequence is LHLALVFCLALVLMQAVKLYL. Heme is bound at residue C452.

It belongs to the cytochrome P450 family. Heme serves as cofactor. In terms of tissue distribution, expressed at high levels in brain, mainly in neurons in different regions, including brain stem, hippocampus, cortex and cerebellum. Also expressed in cerebral vasculature. Not detected in kidney, nor liver.

The protein resides in the endoplasmic reticulum membrane. Its subcellular location is the microsome membrane. It carries out the reaction N-(5Z,8Z,11Z,14Z-eicosatetraenoyl)-ethanolamine + reduced [NADPH--hemoprotein reductase] + O2 = N-(14,15-epoxy-5Z,8Z,11Z-eicosatrienoyl)-ethanolamine + oxidized [NADPH--hemoprotein reductase] + H2O + H(+). Its function is as follows. A cytochrome P450 monooxygenase that selectively catalyzes the epoxidation of the last double bond of the arachidonoyl moiety of anandamide, potentially modulating endocannabinoid signaling. Has no hydroxylase activity toward various fatty acids, steroids and prostaglandins. Mechanistically, uses molecular oxygen inserting one oxygen atom into a substrate, and reducing the second into a water molecule, with two electrons provided by NADPH via cytochrome P450 reductase (CPR; NADPH-ferrihemoprotein reductase). This Rattus norvegicus (Rat) protein is Cytochrome P450 4X1.